Here is a 323-residue protein sequence, read N- to C-terminus: Phosphopantothenate--cysteine ligase 2 (323 aa).

This sequence belongs to the PPC synthetase family. In terms of assembly, homodimer.

It carries out the reaction (R)-4'-phosphopantothenate + L-cysteine + CTP = N-[(R)-4-phosphopantothenoyl]-L-cysteine + CMP + diphosphate + H(+). The protein operates within cofactor biosynthesis; coenzyme A biosynthesis; CoA from (R)-pantothenate: step 2/5. Its function is as follows. Catalyzes the first step in the biosynthesis of coenzyme A from vitamin B5, where cysteine is conjugated to 4'-phosphopantothenate to form 4-phosphopantothenoylcysteine. This is Phosphopantothenate--cysteine ligase 2 from Oryza sativa subsp. japonica (Rice).